Here is a 109-residue protein sequence, read N- to C-terminus: Iron-sulfur cluster assembly protein CyaY (109 aa).

Belongs to the frataxin family.

Involved in iron-sulfur (Fe-S) cluster assembly. May act as a regulator of Fe-S biogenesis. This is Iron-sulfur cluster assembly protein CyaY from Bordetella petrii (strain ATCC BAA-461 / DSM 12804 / CCUG 43448).